The chain runs to 650 residues: Histone-lysine N-methyltransferase family member SUVH9 (650 aa).

2 disordered regions span residues 1 to 24 and 95 to 129; these read MGSS…KLEP and PVEE…RSSE. The span at 7-20 shows a compositional bias: low complexity; sequence PLDPSLNPSPSLIP. The span at 107 to 118 shows a compositional bias: polar residues; the sequence is YSTSDSSPSVAT. The YDG domain maps to 205–352; that stretch reads GSIPGVQVGD…FGVFKYRLER (148 aa). One can recognise a Pre-SET domain in the interval 432-490; sequence SGCDCVNGCGSGCLCEAKNSGEIAYDYNGTLIRQKPLIHECGSACQCPPSCRNRVTQKG. Cys-434, Cys-436, Cys-440, Cys-444, Cys-446, Cys-472, Cys-476, Cys-478, and Cys-482 together coordinate Zn(2+). The SET domain maps to 493–637; sequence NRLEVFRSLE…PMTELSLDYG (145 aa).

It belongs to the class V-like SAM-binding methyltransferase superfamily. Histone-lysine methyltransferase family. Suvar3-9 subfamily. In terms of assembly, component of an RNA-directed DNA methylation (RdDM) complex that contains at least MORC6, MORC1/CRT1, MORC2, SWI3D and SUVH9. Interacts directly with MORC6, MORC2 and MORC1/CRT1. Interacts with SWI3B, SWI3C and SWI3D.

It localises to the nucleus. It is found in the chromosome. The protein resides in the centromere. In terms of biological role, histone methyltransferase family member that plays a role in gene silencing. Together with MORC6 and SUVH2, regulates the silencing of some transposable elements (TEs). According to PubMed:19043555, the protein does not bind S-adenosyl-L-methionine and lacks methyltransferase activity. Instead, it may function downstream of DRM2 in RNA-directed DNA methylation, binding to methylated DNA and recruiting DNA-directed RNA polymerase V to chromatin. The chain is Histone-lysine N-methyltransferase family member SUVH9 (SUVH9) from Arabidopsis thaliana (Mouse-ear cress).